The sequence spans 575 residues: Stage VI sporulation protein D (575 aa).

A disordered region spans residues Glu159–Ser502. Positions Gly200–Ser212 are enriched in basic and acidic residues. 2 stretches are compositionally biased toward acidic residues: residues Lys229–Ala238 and Glu249–Ile264. Composition is skewed to basic and acidic residues over residues Glu266 to Ala275, Asp283 to Ala302, and Ala310 to Thr325. Residues Glu438–Glu448 show a composition bias toward acidic residues. Over residues Ile449 to Thr464 the composition is skewed to basic and acidic residues. The segment covering Pro465–Ser474 has biased composition (polar residues). Basic and acidic residues predominate over residues Glu493 to Ser502. The region spanning Lys523–Ile567 is the LysM domain.

Required for assembly of a normal spore coat. May be a component of the innermost layer of the spore coat that aids in its adherence to the prespore. The protein is Stage VI sporulation protein D (spoVID) of Bacillus subtilis (strain 168).